Here is a 546-residue protein sequence, read N- to C-terminus: Cytochrome P450 monooxygenase 219 (546 aa).

The N-terminal stretch at Met-1–Arg-22 is a signal peptide. N-linked (GlcNAc...) asparagine glycans are attached at residues Asn-367 and Asn-441. Position 487 (Cys-487) interacts with heme.

Belongs to the cytochrome P450 family. Heme is required as a cofactor.

Its pathway is secondary metabolite biosynthesis. Functionally, cytochrome P450 monooxygenase that is able to use testosterone, anthracene, carbazole, pyrene, phenanthrene and trans-stilbene as substrates for oxidation. These multifunctional properties against a series of polycyclic aromatic hydrocarbons (PAHs) suggest that CYP219 would play important roles, at least in part, in fungal metabolic systems involved in xenobiotic detoxification. The sequence is that of Cytochrome P450 monooxygenase 219 from Postia placenta (strain ATCC 44394 / Madison 698-R) (Brown rot fungus).